Reading from the N-terminus, the 362-residue chain is Spermidine/putrescine import ATP-binding protein PotA (362 aa).

The ABC transporter domain maps to 4-235; the sequence is IKLDHITKQY…PVNDFVARFI (232 aa). 37 to 44 is an ATP binding site; the sequence is GPSGSGKT.

Belongs to the ABC transporter superfamily. Spermidine/putrescine importer (TC 3.A.1.11.1) family. As to quaternary structure, the complex is composed of two ATP-binding proteins (PotA), two transmembrane proteins (PotB and PotC) and a solute-binding protein (PotD).

The protein resides in the cell membrane. It catalyses the reaction ATP + H2O + polyamine-[polyamine-binding protein]Side 1 = ADP + phosphate + polyamineSide 2 + [polyamine-binding protein]Side 1.. Functionally, part of the ABC transporter complex PotABCD involved in spermidine/putrescine import. Responsible for energy coupling to the transport system. The chain is Spermidine/putrescine import ATP-binding protein PotA from Lactobacillus delbrueckii subsp. bulgaricus (strain ATCC BAA-365 / Lb-18).